A 134-amino-acid chain; its full sequence is UPF0357 protein AAL017W (134 aa).

An N-terminal signal peptide occupies residues 1–23 (MFGLISLWHLFWLAVMAGILVVA).

This sequence belongs to the UPF0357 family.

The protein is UPF0357 protein AAL017W of Eremothecium gossypii (strain ATCC 10895 / CBS 109.51 / FGSC 9923 / NRRL Y-1056) (Yeast).